Reading from the N-terminus, the 297-residue chain is Acetylglutamate kinase (297 aa).

Residues 70–71, R92, and N194 each bind substrate; that span reads GG.

Belongs to the acetylglutamate kinase family. ArgB subfamily.

It is found in the cytoplasm. It carries out the reaction N-acetyl-L-glutamate + ATP = N-acetyl-L-glutamyl 5-phosphate + ADP. It participates in amino-acid biosynthesis; L-arginine biosynthesis; N(2)-acetyl-L-ornithine from L-glutamate: step 2/4. Its function is as follows. Catalyzes the ATP-dependent phosphorylation of N-acetyl-L-glutamate. The protein is Acetylglutamate kinase of Herminiimonas arsenicoxydans.